The primary structure comprises 198 residues: HTH-type transcriptional regulator BetI (198 aa).

The HTH tetR-type domain occupies Pro8–Leu68. A DNA-binding region (H-T-H motif) is located at residues Thr31 to Phe50.

Its pathway is amine and polyamine biosynthesis; betaine biosynthesis via choline pathway [regulation]. Functionally, repressor involved in the biosynthesis of the osmoprotectant glycine betaine. It represses transcription of the choline transporter BetT and the genes of BetAB involved in the synthesis of glycine betaine. The sequence is that of HTH-type transcriptional regulator BetI from Brucella suis (strain ATCC 23445 / NCTC 10510).